The following is a 735-amino-acid chain: Catalase-peroxidase (735 aa).

Over residues Met-1–Gly-10 the composition is skewed to polar residues. Residues Met-1–Ser-20 are disordered. A cross-link (tryptophyl-tyrosyl-methioninium (Trp-Tyr) (with M-254)) is located at residues Trp-100–Tyr-228. His-101 serves as the catalytic Proton acceptor. Residues Tyr-228–Met-254 constitute a cross-link (tryptophyl-tyrosyl-methioninium (Tyr-Met) (with W-100)). His-269 lines the heme b pocket.

This sequence belongs to the peroxidase family. Peroxidase/catalase subfamily. As to quaternary structure, homodimer or homotetramer. Heme b is required as a cofactor. Post-translationally, formation of the three residue Trp-Tyr-Met cross-link is important for the catalase, but not the peroxidase activity of the enzyme.

It catalyses the reaction H2O2 + AH2 = A + 2 H2O. The catalysed reaction is 2 H2O2 = O2 + 2 H2O. Its function is as follows. Bifunctional enzyme with both catalase and broad-spectrum peroxidase activity. This is Catalase-peroxidase from Jannaschia sp. (strain CCS1).